The following is a 362-amino-acid chain: Phospho-N-acetylmuramoyl-pentapeptide-transferase (362 aa).

10 helical membrane-spanning segments follow: residues 28 to 48 (GATV…IALL), 73 to 93 (TPTM…LLWA), 100 to 120 (VWIV…DDYL), 134 to 154 (VKLF…VLVS), 169 to 189 (TLLI…IVGS), 201 to 221 (GLAI…VYLV), 241 to 261 (LAVF…YNAP), 264 to 284 (MVFM…AIAV), 290 to 310 (LVLA…IVQV), and 339 to 359 (TVVV…LATL).

This sequence belongs to the glycosyltransferase 4 family. MraY subfamily. Mg(2+) serves as cofactor.

The protein resides in the cell inner membrane. It catalyses the reaction UDP-N-acetyl-alpha-D-muramoyl-L-alanyl-gamma-D-glutamyl-meso-2,6-diaminopimeloyl-D-alanyl-D-alanine + di-trans,octa-cis-undecaprenyl phosphate = di-trans,octa-cis-undecaprenyl diphospho-N-acetyl-alpha-D-muramoyl-L-alanyl-D-glutamyl-meso-2,6-diaminopimeloyl-D-alanyl-D-alanine + UMP. The protein operates within cell wall biogenesis; peptidoglycan biosynthesis. Its function is as follows. Catalyzes the initial step of the lipid cycle reactions in the biosynthesis of the cell wall peptidoglycan: transfers peptidoglycan precursor phospho-MurNAc-pentapeptide from UDP-MurNAc-pentapeptide onto the lipid carrier undecaprenyl phosphate, yielding undecaprenyl-pyrophosphoryl-MurNAc-pentapeptide, known as lipid I. The polypeptide is Phospho-N-acetylmuramoyl-pentapeptide-transferase (Parvibaculum lavamentivorans (strain DS-1 / DSM 13023 / NCIMB 13966)).